Reading from the N-terminus, the 240-residue chain is uncharacterized protein (240 aa).

Disordered stretches follow at residues 125–148 (RRLDFSSEDGEEEEENDYIDEDVD) and 177–240 (DESN…RKSR). A compositionally biased stretch (acidic residues) spans 130-148 (SSEDGEEEEENDYIDEDVD). Over residues 192–203 (SPRKSHIDHDFV) the composition is skewed to basic and acidic residues. The segment covering 204-217 (IPEDEMLSEEEEQE) has biased composition (acidic residues). Serine 231 carries the post-translational modification Phosphoserine.

It belongs to the UTP5 family.

The protein localises to the cytoplasm. Its subcellular location is the nucleus. This is an uncharacterized protein from Schizosaccharomyces pombe (strain 972 / ATCC 24843) (Fission yeast).